A 349-amino-acid chain; its full sequence is Nicotinate-nucleotide--dimethylbenzimidazole phosphoribosyltransferase (349 aa).

The Proton acceptor role is filled by Glu318.

The protein belongs to the CobT family.

The catalysed reaction is 5,6-dimethylbenzimidazole + nicotinate beta-D-ribonucleotide = alpha-ribazole 5'-phosphate + nicotinate + H(+). Its pathway is nucleoside biosynthesis; alpha-ribazole biosynthesis; alpha-ribazole from 5,6-dimethylbenzimidazole: step 1/2. Catalyzes the synthesis of alpha-ribazole-5'-phosphate from nicotinate mononucleotide (NAMN) and 5,6-dimethylbenzimidazole (DMB). In Geobacter sp. (strain M21), this protein is Nicotinate-nucleotide--dimethylbenzimidazole phosphoribosyltransferase.